A 392-amino-acid polypeptide reads, in one-letter code: Formate-dependent phosphoribosylglycinamide formyltransferase (392 aa).

Residues 15-16 and E75 contribute to the N(1)-(5-phospho-beta-D-ribosyl)glycinamide site; that span reads EL. Residues R107, K148, 153–158, 188–191, and E196 contribute to the ATP site; these read SSGKGQ and EEFL. Positions 112–302 constitute an ATP-grasp domain; the sequence is DLASEELALL…EFELHLRAVL (191 aa). E261 and E273 together coordinate Mg(2+). Residues D280, K350, and 357-358 each bind N(1)-(5-phospho-beta-D-ribosyl)glycinamide; that span reads RR.

Belongs to the PurK/PurT family. As to quaternary structure, homodimer.

The enzyme catalyses N(1)-(5-phospho-beta-D-ribosyl)glycinamide + formate + ATP = N(2)-formyl-N(1)-(5-phospho-beta-D-ribosyl)glycinamide + ADP + phosphate + H(+). The protein operates within purine metabolism; IMP biosynthesis via de novo pathway; N(2)-formyl-N(1)-(5-phospho-D-ribosyl)glycinamide from N(1)-(5-phospho-D-ribosyl)glycinamide (formate route): step 1/1. Its function is as follows. Involved in the de novo purine biosynthesis. Catalyzes the transfer of formate to 5-phospho-ribosyl-glycinamide (GAR), producing 5-phospho-ribosyl-N-formylglycinamide (FGAR). Formate is provided by PurU via hydrolysis of 10-formyl-tetrahydrofolate. The protein is Formate-dependent phosphoribosylglycinamide formyltransferase of Prochlorococcus marinus (strain MIT 9303).